Reading from the N-terminus, the 105-residue chain is N(4)-acetylcytidine amidohydrolase (105 aa).

Residues 7–93 (TFFERFEHDI…VIAEIYPGLE (87 aa)) form the ASCH domain. Catalysis depends on Lys21, which acts as the Proton acceptor. The active-site Nucleophile is the Thr24. The active-site Proton donor is Glu74.

The protein belongs to the N(4)-acetylcytidine amidohydrolase family.

It carries out the reaction N(4)-acetylcytidine + H2O = cytidine + acetate + H(+). The enzyme catalyses N(4)-acetyl-2'-deoxycytidine + H2O = 2'-deoxycytidine + acetate + H(+). It catalyses the reaction N(4)-acetylcytosine + H2O = cytosine + acetate + H(+). Its function is as follows. Catalyzes the hydrolysis of N(4)-acetylcytidine (ac4C). This is N(4)-acetylcytidine amidohydrolase from Shewanella baltica (strain OS223).